We begin with the raw amino-acid sequence, 95 residues long: UPF0125 protein BUsg_244 (95 aa).

The protein belongs to the UPF0125 (RnfH) family.

This Buchnera aphidicola subsp. Schizaphis graminum (strain Sg) protein is UPF0125 protein BUsg_244.